The following is a 346-amino-acid chain: Dihydroorotase (346 aa).

The Zn(2+) site is built by His13 and His15. Substrate is bound by residues His15–Arg17 and Asn41. Zn(2+)-binding residues include Lys99, His136, and His174. Lys99 is subject to N6-carboxylysine. Position 136 (His136) interacts with substrate. Residue Leu219 participates in substrate binding. Asp247 provides a ligand contact to Zn(2+). The active site involves Asp247. Substrate is bound by residues His251 and Ala263.

It belongs to the metallo-dependent hydrolases superfamily. DHOase family. Class II DHOase subfamily. As to quaternary structure, homodimer. Requires Zn(2+) as cofactor.

The catalysed reaction is (S)-dihydroorotate + H2O = N-carbamoyl-L-aspartate + H(+). The protein operates within pyrimidine metabolism; UMP biosynthesis via de novo pathway; (S)-dihydroorotate from bicarbonate: step 3/3. In terms of biological role, catalyzes the reversible cyclization of carbamoyl aspartate to dihydroorotate. The chain is Dihydroorotase from Rhizobium rhizogenes (strain K84 / ATCC BAA-868) (Agrobacterium radiobacter).